The primary structure comprises 167 residues: Putative peroxiredoxin-B (167 aa).

One can recognise a Thioredoxin domain in the interval 4 to 167 (IKRGDRFPTT…STAQKIIAKL (164 aa)). Catalysis depends on Cys53, which acts as the Cysteine sulfenic acid (-SOH) intermediate. Positions 165-167 (AKL) match the Microbody targeting signal motif.

The protein belongs to the peroxiredoxin family. Prx5 subfamily.

Its subcellular location is the peroxisome membrane. The catalysed reaction is a hydroperoxide + [thioredoxin]-dithiol = an alcohol + [thioredoxin]-disulfide + H2O. Functionally, thiol-specific peroxidase that catalyzes the reduction of hydrogen peroxide and organic hydroperoxides to water and alcohols, respectively. Plays a role in cell protection against oxidative stress by detoxifying peroxides and as sensor of hydrogen peroxide-mediated signaling events. This chain is Putative peroxiredoxin-B (PMPB), found in Candida boidinii (Yeast).